The sequence spans 117 residues: MNNYETVFILTPVLSDAQMKEAVDKFTGLLKQEGAVIVNEENWGLRKLAYPIQKKSTGFYQLVEFQANPDVIAKLETNFRRDERVIRFLTFRQDKFAAEYAAKRRSLKAKTEEVKEA.

This sequence belongs to the bacterial ribosomal protein bS6 family.

Binds together with bS18 to 16S ribosomal RNA. The chain is Small ribosomal subunit protein bS6 from Porphyromonas gingivalis (strain ATCC BAA-308 / W83).